We begin with the raw amino-acid sequence, 477 residues long: ATP synthase subunit beta (477 aa).

Position 148-155 (148-155 (GGAGVGKT)) interacts with ATP.

Belongs to the ATPase alpha/beta chains family. In terms of assembly, F-type ATPases have 2 components, CF(1) - the catalytic core - and CF(0) - the membrane proton channel. CF(1) has five subunits: alpha(3), beta(3), gamma(1), delta(1), epsilon(1). CF(0) has three main subunits: a(1), b(2) and c(9-12). The alpha and beta chains form an alternating ring which encloses part of the gamma chain. CF(1) is attached to CF(0) by a central stalk formed by the gamma and epsilon chains, while a peripheral stalk is formed by the delta and b chains.

It localises to the cell inner membrane. It catalyses the reaction ATP + H2O + 4 H(+)(in) = ADP + phosphate + 5 H(+)(out). Functionally, produces ATP from ADP in the presence of a proton gradient across the membrane. The catalytic sites are hosted primarily by the beta subunits. The chain is ATP synthase subunit beta from Psychrobacter arcticus (strain DSM 17307 / VKM B-2377 / 273-4).